Here is a 594-residue protein sequence, read N- to C-terminus: Potassium-transporting ATPase potassium-binding subunit (594 aa).

Helical transmembrane passes span 3 to 23 (ADFL…APLL), 67 to 87 (AVAM…LQRL), 136 to 156 (ALTV…IALV), 179 to 199 (LYVL…QGVV), 287 to 307 (LEML…GEMV), 314 to 334 (VAIL…AAYF), 415 to 435 (GLYG…LMIG), 453 to 473 (VALV…VAVL), 519 to 539 (VLLG…ILAL), and 562 to 582 (LFVA…YVPA).

Belongs to the KdpA family. As to quaternary structure, the system is composed of three essential subunits: KdpA, KdpB and KdpC.

The protein resides in the cell inner membrane. Functionally, part of the high-affinity ATP-driven potassium transport (or Kdp) system, which catalyzes the hydrolysis of ATP coupled with the electrogenic transport of potassium into the cytoplasm. This subunit binds the periplasmic potassium ions and delivers the ions to the membrane domain of KdpB through an intramembrane tunnel. The protein is Potassium-transporting ATPase potassium-binding subunit of Bordetella pertussis (strain Tohama I / ATCC BAA-589 / NCTC 13251).